Consider the following 303-residue polypeptide: Sulfate adenylyltransferase subunit 2 (303 aa).

A disordered region spans residues 281–303; it reads RQGRVIDHDSSGSMEKKKQEGYF.

Belongs to the PAPS reductase family. CysD subfamily. In terms of assembly, heterodimer composed of CysD, the smaller subunit, and CysN.

It carries out the reaction sulfate + ATP + H(+) = adenosine 5'-phosphosulfate + diphosphate. It functions in the pathway sulfur metabolism; hydrogen sulfide biosynthesis; sulfite from sulfate: step 1/3. With CysN forms the ATP sulfurylase (ATPS) that catalyzes the adenylation of sulfate producing adenosine 5'-phosphosulfate (APS) and diphosphate, the first enzymatic step in sulfur assimilation pathway. APS synthesis involves the formation of a high-energy phosphoric-sulfuric acid anhydride bond driven by GTP hydrolysis by CysN coupled to ATP hydrolysis by CysD. This Saccharophagus degradans (strain 2-40 / ATCC 43961 / DSM 17024) protein is Sulfate adenylyltransferase subunit 2.